The chain runs to 251 residues: PF03932 family protein CutC (251 aa).

It belongs to the CutC family.

It is found in the cytoplasm. This Bacteroides fragilis (strain ATCC 25285 / DSM 2151 / CCUG 4856 / JCM 11019 / LMG 10263 / NCTC 9343 / Onslow / VPI 2553 / EN-2) protein is PF03932 family protein CutC.